The following is a 433-amino-acid chain: MALRVTRNSKINAENKAKINMAGAKRVPTAPAATSKPGLRPRTALGDIGNKVSEQLQAKMPMKKEAKPSATGKVIDKKLPKPLEKVPMLVPVPVSEPVPEPEPEPEPEPVKEEKLSPEPILVDTASPSPMETSGCAPAEEDLCQAFSDVILAVNDVDAEDGADPNLCSEYVKDIYAYLRQLEEEQAVRPKYLLGREVTGNMRAILIDWLVQVQMKFRLLQETMYMTVSIIDRFMQNNCVPKKMLQLVGVTAMFIASKYEEMYPPEIGDFAFVTDNTYTKHQIRQMEMKILRALNFGLGRPLPLHFLRRASKIGEVDVEQHTLAKYLMELTMLDYDMVHFPPSQIAAGAFCLALKILDNGEWTPTLQHYLSYTEESLLPVMQHLAKNVVMVNQGLTKHMTVKNKYATSKHAKISTLPQLNSALVQDLAKAVAKV.

The segment at 19–47 (INMAGAKRVPTAPAATSKPGLRPRTALGD) is disordered. Lys73 carries the N6-acetyllysine modification. The tract at residues 93–116 (PVSEPVPEPEPEPEPEPVKEEKLS) is disordered. Phosphoserine; by CDK1 is present on Ser126. At Ser128 the chain carries Phosphoserine. A Phosphoserine; by PLK1 modification is found at Ser133. Ser147 is subject to Phosphoserine. 2 interaction with CDK2 regions span residues 169–177 (EYVKDIYAY) and 258–261 (YEEM). Thr321 carries the post-translational modification Phosphothreonine.

This sequence belongs to the cyclin family. Cyclin AB subfamily. Interacts with the CDC2 protein kinase to form a serine/threonine kinase holoenzyme complex also known as maturation promoting factor (MPF). The cyclin subunit imparts substrate specificity to the complex. Binds HEI10. Interacts with catalytically active RALBP1 and CDC2 during mitosis to form an endocytotic complex during interphase. Interacts with CCNF; interaction is required for nuclear localization. Interacts with CDK5RAP3. Interacts with RFPL4A and UBE2A. Interacts with INCA1. Post-translationally, ubiquitinated by the SCF(NIPA) complex during interphase, leading to its destruction. Deubiquitinated by USP22 during G2/M phase. Phosphorylated by PLK1 at Ser-133 on centrosomes during prophase: phosphorylation by PLK1 does not cause nuclear import. Phosphorylation at Ser-147 was also reported to be mediated by PLK1 but Ser-133 seems to be the primary phosphorylation site.

It is found in the cytoplasm. It localises to the nucleus. Its subcellular location is the cytoskeleton. The protein localises to the microtubule organizing center. The protein resides in the centrosome. Functionally, essential for the control of the cell cycle at the G2/M (mitosis) transition. The sequence is that of G2/mitotic-specific cyclin-B1 (CCNB1) from Homo sapiens (Human).